We begin with the raw amino-acid sequence, 123 residues long: Omega-oxotoxin-Ot1a (123 aa).

The first 16 residues, 1 to 16 (MKIVLVFVCTLYLAQA), serve as a signal peptide directing secretion. Residues 17 to 54 (TYLSEQDVNEVSEFLEALDQANEAASEMVEAAETEEAR) constitute a propeptide that is removed on maturation. In terms of domain architecture, Oxytoxin-type inhibitor cystine knot (ICK) spans 55-122 (DWECLPLHSS…GKINTCDKYK (68 aa)). 5 cysteine pairs are disulfide-bonded: Cys-58-Cys-72, Cys-65-Cys-77, Cys-69-Cys-118, Cys-71-Cys-106, and Cys-79-Cys-104.

This sequence belongs to the spiderine family. Spiderine subfamily. In terms of processing, mass spectrometry data suggest a carboxylated free C-terminal residue. In terms of tissue distribution, expressed by the venom gland.

The protein localises to the secreted. Functionally, weak blocker of vertebrate P/Q-, N- and L-type voltage-gated calcium channels (Cav1 and Cav2). Is both paralytic and lethal when injected into lepidopteran larvae. Is not toxic to mice. The protein is Omega-oxotoxin-Ot1a of Oxyopes takobius (Lynx spider).